Consider the following 125-residue polypeptide: Basic leucine zipper transcriptional factor ATF-like (125 aa).

A compositionally biased stretch (low complexity) spans 1 to 14 (MPHSSDSSDSSFSR). The interval 1–59 (MPHSSDSSDSSFSRSPPPGKQDSSDDVRKVQRREKNRIAAQKSRQRQTQKADTLHLESE) is disordered. The bZIP domain maps to 26–89 (DVRKVQRREK…KYFTSVLSSH (64 aa)). Positions 28–50 (RKVQRREKNRIAAQKSRQRQTQK) are basic motif. Residue Ser-43 is modified to Phosphoserine. Phosphothreonine is present on Thr-48. The tract at residues 54–75 (LHLESEDLEKQNAALRKEIKQL) is leucine-zipper.

The protein belongs to the bZIP family. In terms of assembly, heterodimer; mainly heterodimerizes with JUNB. The BATF-JUNB heterodimer interacts with IRF4 and IRF8. Interacts (via bZIP domain) with IRF4 and IRF8; the interaction is direct. Also forms heterodimers with JUN and JUND. Interacts with IFI35. Post-translationally, phosphorylated on serine and threonine residues and at least one tyrosine residue. Phosphorylation at Ser-43 inhibit DNA binding activity and transforms it as a negative regulator of AP-1 mediated transcription. In terms of tissue distribution, detected in postnatal and adult lymphoid tissues such as thymus, spleen and lymph nodes. In thymus most concentrated expression is found in the immediate cortical layer. Differentially expressed during T-cell development in thymus. Highly expressed in Th17, Th1 and Th2 cells and in activated B-cells.

The protein localises to the nucleus. It is found in the cytoplasm. Functionally, AP-1 family transcription factor that controls the differentiation of lineage-specific cells in the immune system: specifically mediates the differentiation of T-helper 17 cells (Th17), follicular T-helper cells (TfH), CD8(+) dendritic cells and class-switch recombination (CSR) in B-cells. Acts via the formation of a heterodimer with JUNB that recognizes and binds DNA sequence 5'-TGA[CG]TCA-3'. The BATF-JUNB heterodimer also forms a complex with IRF4 (or IRF8) in immune cells, leading to recognition of AICE sequence (5'-TGAnTCA/GAAA-3'), an immune-specific regulatory element, followed by cooperative binding of BATF and IRF4 (or IRF8) and activation of genes. Controls differentiation of T-helper cells producing interleukin-17 (Th17 cells) by binding to Th17-associated gene promoters: regulates expression of the transcription factor RORC itself and RORC target genes such as IL17 (IL17A or IL17B). Also involved in differentiation of follicular T-helper cells (TfH) by directing expression of BCL6 and MAF. In B-cells, involved in class-switch recombination (CSR) by controlling the expression of both AICDA and of germline transcripts of the intervening heavy-chain region and constant heavy-chain region (I(H)-C(H)). Following infection, can participate in CD8(+) dendritic cell differentiation via interaction with IRF4 and IRF8 to mediate cooperative gene activation. Regulates effector CD8(+) T-cell differentiation by regulating expression of SIRT1. Following DNA damage, part of a differentiation checkpoint that limits self-renewal of hematopoietic stem cells (HSCs): up-regulated by STAT3, leading to differentiation of HSCs, thereby restricting self-renewal of HSCs. The sequence is that of Basic leucine zipper transcriptional factor ATF-like (Batf) from Mus musculus (Mouse).